Here is a 384-residue protein sequence, read N- to C-terminus: Probable protein phosphatase 2C 48 (384 aa).

The PPM-type phosphatase domain maps to I47–L358. S78 is subject to Phosphoserine. D89, G90, D290, and D349 together coordinate Mn(2+).

This sequence belongs to the PP2C family. Mg(2+) is required as a cofactor. It depends on Mn(2+) as a cofactor.

It carries out the reaction O-phospho-L-seryl-[protein] + H2O = L-seryl-[protein] + phosphate. It catalyses the reaction O-phospho-L-threonyl-[protein] + H2O = L-threonyl-[protein] + phosphate. May dephosphorylate and repress plasma membrane H(+)-ATPases (PM H(+)-ATPases, e.g. AHA1 and AHA2), thus influencing negatively plant growth and fitness. This chain is Probable protein phosphatase 2C 48, found in Arabidopsis thaliana (Mouse-ear cress).